The chain runs to 179 residues: Large ribosomal subunit protein uL5 (179 aa).

The protein belongs to the universal ribosomal protein uL5 family. Part of the 50S ribosomal subunit; part of the 5S rRNA/L5/L18/L25 subcomplex. Contacts the 5S rRNA and the P site tRNA. Forms a bridge to the 30S subunit in the 70S ribosome.

In terms of biological role, this is one of the proteins that bind and probably mediate the attachment of the 5S RNA into the large ribosomal subunit, where it forms part of the central protuberance. In the 70S ribosome it contacts protein S13 of the 30S subunit (bridge B1b), connecting the 2 subunits; this bridge is implicated in subunit movement. Contacts the P site tRNA; the 5S rRNA and some of its associated proteins might help stabilize positioning of ribosome-bound tRNAs. The protein is Large ribosomal subunit protein uL5 of Ectopseudomonas mendocina (strain ymp) (Pseudomonas mendocina).